Reading from the N-terminus, the 423-residue chain is Acetylornithine aminotransferase, mitochondrial (423 aa).

Lys-276 is subject to N6-(pyridoxal phosphate)lysine.

It belongs to the class-III pyridoxal-phosphate-dependent aminotransferase family. Pyridoxal 5'-phosphate serves as cofactor.

Its subcellular location is the mitochondrion matrix. The catalysed reaction is N(2)-acetyl-L-ornithine + 2-oxoglutarate = N-acetyl-L-glutamate 5-semialdehyde + L-glutamate. It functions in the pathway amino-acid biosynthesis; L-arginine biosynthesis; N(2)-acetyl-L-ornithine from L-glutamate: step 4/4. The chain is Acetylornithine aminotransferase, mitochondrial (ARG8) from Eremothecium gossypii (strain ATCC 10895 / CBS 109.51 / FGSC 9923 / NRRL Y-1056) (Yeast).